We begin with the raw amino-acid sequence, 437 residues long: UDP-N-acetylmuramate--L-alanine ligase (437 aa).

Residue 114 to 120 (GTHGKTS) coordinates ATP.

Belongs to the MurCDEF family.

It is found in the cytoplasm. The enzyme catalyses UDP-N-acetyl-alpha-D-muramate + L-alanine + ATP = UDP-N-acetyl-alpha-D-muramoyl-L-alanine + ADP + phosphate + H(+). It participates in cell wall biogenesis; peptidoglycan biosynthesis. Cell wall formation. The chain is UDP-N-acetylmuramate--L-alanine ligase from Lactobacillus helveticus (strain DPC 4571).